Here is a 360-residue protein sequence, read N- to C-terminus: NAD(P)H-quinone oxidoreductase subunit 1, chloroplastic (360 aa).

Helical transmembrane passes span 27–47, 98–118, 129–149, 165–185, 203–223, 253–273, 297–317, and 340–360; these read IWIF…VLVI, FSIG…IIPF, IGIF…LMSG, AAQS…ISLL, FWGW…ISSL, FGLF…FVTV, IFGT…FLFI, and FLLP…LFSL.

Belongs to the complex I subunit 1 family. In terms of assembly, NDH is composed of at least 16 different subunits, 5 of which are encoded in the nucleus.

The protein localises to the plastid. It is found in the chloroplast thylakoid membrane. It catalyses the reaction a plastoquinone + NADH + (n+1) H(+)(in) = a plastoquinol + NAD(+) + n H(+)(out). The catalysed reaction is a plastoquinone + NADPH + (n+1) H(+)(in) = a plastoquinol + NADP(+) + n H(+)(out). Its function is as follows. NDH shuttles electrons from NAD(P)H:plastoquinone, via FMN and iron-sulfur (Fe-S) centers, to quinones in the photosynthetic chain and possibly in a chloroplast respiratory chain. The immediate electron acceptor for the enzyme in this species is believed to be plastoquinone. Couples the redox reaction to proton translocation, and thus conserves the redox energy in a proton gradient. In Lobularia maritima (Sweet alyssum), this protein is NAD(P)H-quinone oxidoreductase subunit 1, chloroplastic.